A 123-amino-acid chain; its full sequence is UPF0102 protein CLJ_B2665 (123 aa).

The protein belongs to the UPF0102 family.

The protein is UPF0102 protein CLJ_B2665 of Clostridium botulinum (strain 657 / Type Ba4).